The following is a 470-amino-acid chain: MEQQVLTVRDLVTAQSLGMKVLSGAGGLDRQVLWAHSCELSDPDRWLGPHELLMTVGLCVPHSAVEQRNFIVKLDEAGLSGVALGDHNSLPPLTRELYEEADRRSFPVLLTNQATPFAAIGRTVAAATATTQTMQVLKLSKLYQLSTYARTDPLRMMNDLQALLRAGLSVFDVQTGLTIVEGAPLEFMPTSVRERTYALPGDSDSRLMISEYPGEEVSSFLLIHVLQVIDVALSQLLRSLRRRSERSTQMLASIFEGRSPDGLGSILGPSGTSSGYQFVAVALEDSEKVARAASIKSLPVLAGPGSSSFFILMPEQSRNDVRNLLHGLDVRAGVSSTYLDLRDAKAAADEAAKIFSSGGTNGLWTDFTGVPVSLLTRSRKEASAIVQQVLGRLAGTDPKITVLRETLFAFLANDRRWNETAAALGIHRQTLSYRLTRIKEITGRDIASSADLSAFWLAFQAWPSFSDRSD.

In terms of assembly, forms oligomers in solution, probably homotetramers.

The protein operates within alkaloid degradation; nicotine degradation [regulation]. Its function is as follows. Transcriptional regulator involved in the activation of the purU-mabO-folD-nepA-nepB and mao-ORF55-nbr operons implicated in the nicotine catabolic pathway. The sequence GTTT-14 bp-AAAC seems to be the core binding site of the regulator upstream of the -35 promoter region of the operon. The polypeptide is Transcriptional activator PmfR (pmfR) (Paenarthrobacter nicotinovorans (Arthrobacter nicotinovorans)).